Consider the following 187-residue polypeptide: Putative lipoprotein LppJ (187 aa).

An N-terminal signal peptide occupies residues 1-28; the sequence is MPHSTADRRLRLTRQALLAAAVAPLLAG. A lipid anchor (N-palmitoyl cysteine) is attached at Cys-29. A lipid anchor (S-diacylglycerol cysteine) is attached at Cys-29.

It is found in the cell membrane. The chain is Putative lipoprotein LppJ (lppJ) from Mycobacterium bovis (strain ATCC BAA-935 / AF2122/97).